Consider the following 218-residue polypeptide: Glutathione S-transferase A (218 aa).

N-acetylserine is present on serine 1. Residues 2 to 82 (GKPVLHYFNV…YIATKYNLYG (81 aa)) form the GST N-terminal domain. Lysine 3 is subject to N6-succinyllysine. Glutathione-binding positions include tyrosine 8, lysine 44, 53–54 (QV), and 66–67 (QS). A GST C-terminal domain is found at 84-206 (DTKERLLIDM…LQPGSQRKPF (123 aa)).

It belongs to the GST superfamily. Alpha family. Homodimer or heterodimer of GSTA1 and GSTA2.

The protein localises to the cytoplasm. The enzyme catalyses RX + glutathione = an S-substituted glutathione + a halide anion + H(+). The catalysed reaction is prostaglandin A2 + glutathione = prostaglandin A2-S-(R)-glutathione. It carries out the reaction prostaglandin J2 + glutathione = prostaglandin J2-S-(R)-glutathione. It catalyses the reaction (13S)-hydroperoxy-(9Z,11E)-octadecadienoate + 2 glutathione = (13S)-hydroxy-(9Z,11E)-octadecadienoate + glutathione disulfide + H2O. The enzyme catalyses androst-5-ene-3,17-dione = androst-4-ene-3,17-dione. Functionally, glutathione S-transferase that catalyzes the nucleophilic attack of the sulfur atom of glutathione on the electrophilic groups of a wide range of exogenous and endogenous compounds. Involved in the formation of glutathione conjugates of both prostaglandin A2 (PGA2) and prostaglandin J2 (PGJ2). It also catalyzes the isomerization of D5-androstene-3,17-dione (AD) into D4-androstene-3,17-dione and may therefore play an important role in hormone biosynthesis. Through its glutathione-dependent peroxidase activity toward the fatty acid hydroperoxide (13S)-hydroperoxy-(9Z,11E)-octadecadienoate/13-HPODE it is also involved in the metabolism of oxidized linoleic acid. The chain is Glutathione S-transferase A from Cavia porcellus (Guinea pig).